We begin with the raw amino-acid sequence, 168 residues long: uncharacterized protein (168 aa).

Disordered regions lie at residues 1 to 81 and 119 to 150; these read MSSA…GRSW and RDLS…STVA. Low complexity predominate over residues 7-34; it reads SRTSRSKATGASSSSISSSIRASPSSSS. Over residues 43-67 the composition is skewed to basic residues; it reads TRRRRRRTGRRSTKRSIISPRRRRM. Residues 123 to 146 show a composition bias toward polar residues; that stretch reads ESASTGSENLSRKASNQSQSQGRL.

This is an uncharacterized protein from Human adenovirus C serotype 2 (HAdV-2).